The primary structure comprises 101 residues: NADH-quinone oxidoreductase subunit K (101 aa).

3 helical membrane passes run 4–24 (LGHMLALGAVLFAISLAGIFL), 30–50 (IVLLMSIELMLLSVNINFVGF), and 62–82 (FVFFILTVAAAEAAIGLAILV).

It belongs to the complex I subunit 4L family. As to quaternary structure, NDH-1 is composed of 14 different subunits. Subunits NuoA, H, J, K, L, M, N constitute the membrane sector of the complex.

Its subcellular location is the cell inner membrane. It carries out the reaction a quinone + NADH + 5 H(+)(in) = a quinol + NAD(+) + 4 H(+)(out). Functionally, NDH-1 shuttles electrons from NADH, via FMN and iron-sulfur (Fe-S) centers, to quinones in the respiratory chain. The immediate electron acceptor for the enzyme in this species is believed to be ubiquinone. Couples the redox reaction to proton translocation (for every two electrons transferred, four hydrogen ions are translocated across the cytoplasmic membrane), and thus conserves the redox energy in a proton gradient. In Stenotrophomonas maltophilia (strain K279a), this protein is NADH-quinone oxidoreductase subunit K.